The primary structure comprises 388 residues: Probable nitrate transporter NarT (388 aa).

Transmembrane regions (helical) follow at residues 14 to 34 (TLSL…MPMI), 45 to 65 (ISIV…PFGY), 69 to 89 (IIGA…PIFL), 98 to 118 (MLML…VGVT), 139 to 159 (GNLG…AIGW), 161 to 181 (STVR…FFLG), 206 to 226 (YYLS…GIFL), 242 to 262 (GIRA…GGII), 276 to 296 (FLFM…ILFT), 297 to 317 (VGCL…FKLV), 330 to 350 (GIVS…ITYV), and 359 to 379 (LAFI…WHLS).

Belongs to the major facilitator superfamily. Nitrate/nitrite porter (TC 2.A.1.8) family.

The protein localises to the cell membrane. Its function is as follows. Probably required for nitrate uptake under anoxic conditions. Also possibly involved in excretion of nitrite produced by the dissimilatory reduction of nitrate. This chain is Probable nitrate transporter NarT (narT), found in Staphylococcus carnosus (strain TM300).